The sequence spans 213 residues: Orotate phosphoribosyltransferase (213 aa).

K26 lines the 5-phospho-alpha-D-ribose 1-diphosphate pocket. 34 to 35 is an orotate binding site; that stretch reads FF. Residues 72–73, R99, K100, K103, H105, and 124–132 contribute to the 5-phospho-alpha-D-ribose 1-diphosphate site; these read YK and DDVITAGTA. Positions 128 and 156 each coordinate orotate.

The protein belongs to the purine/pyrimidine phosphoribosyltransferase family. PyrE subfamily. As to quaternary structure, homodimer. Mg(2+) serves as cofactor.

The enzyme catalyses orotidine 5'-phosphate + diphosphate = orotate + 5-phospho-alpha-D-ribose 1-diphosphate. It participates in pyrimidine metabolism; UMP biosynthesis via de novo pathway; UMP from orotate: step 1/2. Its function is as follows. Catalyzes the transfer of a ribosyl phosphate group from 5-phosphoribose 1-diphosphate to orotate, leading to the formation of orotidine monophosphate (OMP). The sequence is that of Orotate phosphoribosyltransferase from Vibrio vulnificus (strain YJ016).